The chain runs to 189 residues: NADH-quinone oxidoreductase subunit B (189 aa).

4 residues coordinate [4Fe-4S] cluster: Cys39, Cys40, Cys104, and Cys135.

It belongs to the complex I 20 kDa subunit family. NDH-1 is composed of 14 different subunits. Subunits NuoB, C, D, E, F, and G constitute the peripheral sector of the complex. [4Fe-4S] cluster is required as a cofactor.

The protein resides in the cell inner membrane. The catalysed reaction is a quinone + NADH + 5 H(+)(in) = a quinol + NAD(+) + 4 H(+)(out). Its function is as follows. NDH-1 shuttles electrons from NADH, via FMN and iron-sulfur (Fe-S) centers, to quinones in the respiratory chain. The immediate electron acceptor for the enzyme in this species is believed to be a menaquinone. Couples the redox reaction to proton translocation (for every two electrons transferred, four hydrogen ions are translocated across the cytoplasmic membrane), and thus conserves the redox energy in a proton gradient. The sequence is that of NADH-quinone oxidoreductase subunit B from Chlorobium luteolum (strain DSM 273 / BCRC 81028 / 2530) (Pelodictyon luteolum).